We begin with the raw amino-acid sequence, 189 residues long: Protein Rex (189 aa).

A compositionally biased stretch (basic residues) spans Met1–Pro16. Positions Met1–Asp27 are disordered. Residues Pro2–Thr18 carry the Nuclear localization signal, and RNA-binding (RxRE) motif. A homomultimerization region spans residues Arg56–Ser70. Ser70 carries the phosphoserine; by host modification. The Nuclear export signal motif lies at Leu82–Asp93. A disordered region spans residues Tyr87–Met189. The segment covering Pro105–Leu114 has biased composition (low complexity). The tract at residues Pro123–Thr131 is homomultimerization. Residues Leu143 to Pro164 show a composition bias toward polar residues. Phosphothreonine; by host is present on Thr174. A Phosphoserine; by host modification is found at Ser177. Positions Phe178 to Met189 are enriched in pro residues.

The protein belongs to the deltaretrovirus Rex protein family. As to quaternary structure, homomultimer. Multimeric assembly is essential for activity and involves XPO1. Binds to human XPO1 and KPNB1. Interacts (via N-terminal nuclear localization signal) with human NPM1. Phosphorylated.

It is found in the host nucleus. The protein localises to the host nucleolus. Its subcellular location is the host cytoplasm. Its function is as follows. Rex escorts unspliced gag-pro-pol and singly spliced env mRNAs out of the nucleus of infected cells. These mRNAs carry a recognition sequence called Rex responsive element (RxRE or XRE) located at the 3' region of the long terminal repeat (LTR). This function is essential since most HTLV proteins are translated from unspliced or partially spliced pre-mRNAs that cannot exit the nucleus by the pathway used by fully processed cellular mRNAs. Rex itself is translated from a fully spliced mRNA that probably readily exits the nucleus. Rex's nuclear localization signal (NLS) binds directly to KPNB1/importin beta-1 without previous binding to KPNA1/importin alpha-1. KPNB1 binds to the GDP bound form of RAN (Ran-GDP) and targets Rex to the nucleus. In the nucleus, the conversion from Ran-GDP to Ran-GTP dissociates Rex from KPNB1 and allows Rex's binding to the RRE in viral pre-mRNAs. Rex multimerizes on the RRE via cooperative assembly. This multimerization is critical for its full biological activity, since it may shield the viral RNA from being spliced or down-regulated, and probably exposes Rex's nuclear export signal (NES) to the surface. Rex can then form a complex with XPO1/CRM1, RANBP3 and Ran-GTP, leading to nuclear export of the complex. Conversion from Ran-GTP to Ran-GDP mediates dissociation of the Rex/RRE/XPO1/RANBP3/RAN complex, so that Rex can return to the nucleus for a subsequent round of export. The protein is Protein Rex of Human T-cell leukemia virus 1 (isolate Caribbea HS-35 subtype A) (HTLV-1).